The sequence spans 101 residues: Small ribosomal subunit protein bS18c (101 aa).

Basic residues predominate over residues 1–19; it reads MDKSKQPFRKSKRSFRRRL. The tract at residues 1–24 is disordered; that stretch reads MDKSKQPFRKSKRSFRRRLPPIGS.

This sequence belongs to the bacterial ribosomal protein bS18 family. As to quaternary structure, part of the 30S ribosomal subunit.

The protein localises to the plastid. Its subcellular location is the chloroplast. The chain is Small ribosomal subunit protein bS18c from Amborella trichopoda.